We begin with the raw amino-acid sequence, 71 residues long: Natterin-P (71 aa).

The signal sequence occupies residues 1 to 18 (MKLLVLLVTLLVLSWTSA). A propeptide spanning residues 19–45 (EDLGDQEILENNEDNNHESELGEPAAQ) is cleaved from the precursor. The segment covering 22 to 31 (GDQEILENNE) has biased composition (acidic residues). Residues 22 to 54 (GDQEILENNEDNNHESELGEPAAQHTDDETSQL) are disordered. A disulfide bridge links C62 with C71.

Belongs to the natterin family. In terms of tissue distribution, expressed by the venom gland.

The protein resides in the secreted. Its activity is regulated as follows. Inhibited by tissue-kallikrein inhibitor TKI and trasylol. Plasma kallikrein inhibitor PKSI527 and classical inhibitors of serine-, metallo-, thiol- or aspartate-peptidases evokes a minor inhibition of the peptide digestion. Its function is as follows. Shows nociceptive, edema-inducing and kininogenase activity with release of kallidin from low molecular weight kininogen. The cleavage occurs at Met-Lys bonds. The polypeptide is Natterin-P (Thalassophryne nattereri (Copper Joe toadfish)).